Consider the following 386-residue polypeptide: 2,3-diketo-5-methylthiopentyl-1-phosphate enolase (386 aa).

The Proton acceptor role is filled by Lys-85. Residues Lys-131, 157–160, His-248, Gly-316, and 338–339 contribute to the substrate site; these read KDDE and GT. Positions 157, 159, and 160 each coordinate Mg(2+). Position 157 is an N6-carboxylysine (Lys-157).

It belongs to the RuBisCO large chain family. Type IV subfamily. Homodimer. Mg(2+) is required as a cofactor.

The catalysed reaction is 5-methylsulfanyl-2,3-dioxopentyl phosphate = 2-hydroxy-5-methylsulfanyl-3-oxopent-1-enyl phosphate. It participates in amino-acid biosynthesis; L-methionine biosynthesis via salvage pathway; L-methionine from S-methyl-5-thio-alpha-D-ribose 1-phosphate: step 3/6. Its function is as follows. Catalyzes the enolization of 2,3-diketo-5-methylthiopentyl-1-phosphate (DK-MTP-1-P) into 2-hydroxy-3-keto-5-methylthiopentenyl-1-phosphate (HK-MTPenyl-1-P). The protein is 2,3-diketo-5-methylthiopentyl-1-phosphate enolase (mtnW) of Microcystis aeruginosa.